Consider the following 556-residue polypeptide: Glutamine--tRNA ligase (556 aa).

Residues 33–43 (PEPNGYLHIGH) carry the 'HIGH' region motif. ATP contacts are provided by residues 34–36 (EPN) and 40–46 (HIGHAKS). The L-glutamine site is built by aspartate 66 and tyrosine 210. Residues threonine 229, 259–260 (RL), and 267–269 (MSK) each bind ATP. The 'KMSKS' region motif lies at 266–270 (VMSKR).

Belongs to the class-I aminoacyl-tRNA synthetase family. In terms of assembly, monomer.

It is found in the cytoplasm. The enzyme catalyses tRNA(Gln) + L-glutamine + ATP = L-glutaminyl-tRNA(Gln) + AMP + diphosphate. The chain is Glutamine--tRNA ligase from Clostridium kluyveri (strain ATCC 8527 / DSM 555 / NBRC 12016 / NCIMB 10680 / K1).